A 181-amino-acid chain; its full sequence is ATP synthase subunit b, chloroplastic (181 aa).

A helical membrane pass occupies residues 27-49 (LATNPINLSVVLGVVIYFGKGVL).

It belongs to the ATPase B chain family. As to quaternary structure, F-type ATPases have 2 components, F(1) - the catalytic core - and F(0) - the membrane proton channel. F(1) has five subunits: alpha(3), beta(3), gamma(1), delta(1), epsilon(1). F(0) has four main subunits: a(1), b(1), b'(1) and c(10-14). The alpha and beta chains form an alternating ring which encloses part of the gamma chain. F(1) is attached to F(0) by a central stalk formed by the gamma and epsilon chains, while a peripheral stalk is formed by the delta, b and b' chains.

The protein localises to the plastid. It is found in the chloroplast thylakoid membrane. In terms of biological role, f(1)F(0) ATP synthase produces ATP from ADP in the presence of a proton or sodium gradient. F-type ATPases consist of two structural domains, F(1) containing the extramembraneous catalytic core and F(0) containing the membrane proton channel, linked together by a central stalk and a peripheral stalk. During catalysis, ATP synthesis in the catalytic domain of F(1) is coupled via a rotary mechanism of the central stalk subunits to proton translocation. Functionally, component of the F(0) channel, it forms part of the peripheral stalk, linking F(1) to F(0). This is ATP synthase subunit b, chloroplastic from Lemna minor (Common duckweed).